Consider the following 626-residue polypeptide: Receptor-like protein 4 (626 aa).

The signal sequence occupies residues 1-22 (MMLRFILASLLLSSFSLYSSLA). Residues 23–549 (RPAPYALRIS…CGPHLSSGAK (527 aa)) are Extracellular-facing. N-linked (GlcNAc...) asparagine glycans are attached at residues asparagine 61, asparagine 282, asparagine 333, and asparagine 417. LRR repeat units follow at residues 420–444 (RWFI…ISKL), 445–468 (KHLQ…LGSV), 470–492 (SLEV…LGEL), and 493–516 (TSLR…VGGR). N-linked (GlcNAc...) asparagine glycans are attached at residues asparagine 451 and asparagine 482. Asparagine 524 carries N-linked (GlcNAc...) asparagine glycosylation. A helical membrane pass occupies residues 550–570 (IGIAFGVSLAFLLIVACAMIW). Residues 571–626 (WKRRQNILRAQQIAARGAPYAKKRTHVSHDIQMSRHGHNNHGQARTAVENGPSLLS) are Cytoplasmic-facing. The disordered stretch occupies residues 603–626 (MSRHGHNNHGQARTAVENGPSLLS).

Belongs to the RLP family.

The protein localises to the cell membrane. The polypeptide is Receptor-like protein 4 (Arabidopsis thaliana (Mouse-ear cress)).